A 242-amino-acid polypeptide reads, in one-letter code: 1-(5-phosphoribosyl)-5-[(5-phosphoribosylamino)methylideneamino] imidazole-4-carboxamide isomerase (242 aa).

Residue aspartate 8 is the Proton acceptor of the active site. The active-site Proton donor is the aspartate 129.

It belongs to the HisA/HisF family.

The protein resides in the cytoplasm. It catalyses the reaction 1-(5-phospho-beta-D-ribosyl)-5-[(5-phospho-beta-D-ribosylamino)methylideneamino]imidazole-4-carboxamide = 5-[(5-phospho-1-deoxy-D-ribulos-1-ylimino)methylamino]-1-(5-phospho-beta-D-ribosyl)imidazole-4-carboxamide. Its pathway is amino-acid biosynthesis; L-histidine biosynthesis; L-histidine from 5-phospho-alpha-D-ribose 1-diphosphate: step 4/9. This is 1-(5-phosphoribosyl)-5-[(5-phosphoribosylamino)methylideneamino] imidazole-4-carboxamide isomerase from Dictyoglomus turgidum (strain DSM 6724 / Z-1310).